The primary structure comprises 968 residues: Translation initiation factor IF-2 (968 aa).

The segment covering 51 to 76 has biased composition (low complexity); the sequence is PAAGASKSEAPAAAPKAPASPAATRP. Residues 51–369 are disordered; it reads PAAGASKSEA…GVSVPRGDGN (319 aa). The segment covering 77-87 has biased composition (pro residues); it reads APAPGPAAPKA. A compositionally biased stretch (low complexity) spans 93 to 102; sequence EAPAAASAPS. Pro residues predominate over residues 103–112; it reads APAPAAPAPA. Composition is skewed to low complexity over residues 113–122, 128–170, and 239–254; these read APAAAASAPS, APST…GNNP, and GARPGAPRPAGAPGAR. Positions 281 to 336 are enriched in gly residues; it reads GRPGGGGRGPGRPGGAPGTGGAPGAGGGAPAGGGFGKGGRGRGGTQGAFGKGGAGR. The span at 337–346 shows a compositional bias: basic residues; the sequence is GKQRKSKRAK. A tr-type G domain is found at 461–632; it reads ARPPVVTVMG…AVLLTADAAL (172 aa). A G1 region spans residues 470–477; sequence GHVDHGKT. GTP is bound at residue 470-477; the sequence is GHVDHGKT. The G2 stretch occupies residues 495 to 499; sequence GITQH. The tract at residues 520 to 523 is G3; it reads DTPG. Residues 520 to 524 and 574 to 577 contribute to the GTP site; these read DTPGH and NKID. The G4 stretch occupies residues 574 to 577; sequence NKID. Residues 610-612 form a G5 region; the sequence is SAR.

This sequence belongs to the TRAFAC class translation factor GTPase superfamily. Classic translation factor GTPase family. IF-2 subfamily.

Its subcellular location is the cytoplasm. Its function is as follows. One of the essential components for the initiation of protein synthesis. Protects formylmethionyl-tRNA from spontaneous hydrolysis and promotes its binding to the 30S ribosomal subunits. Also involved in the hydrolysis of GTP during the formation of the 70S ribosomal complex. The protein is Translation initiation factor IF-2 of Arthrobacter sp. (strain FB24).